The chain runs to 74 residues: Cytochrome c oxidase copper chaperone 1 (74 aa).

The disordered stretch occupies residues 1-30 (MTDQPAQNGLIPPPTSEPSKAAASAETKPK). Cu cation contacts are provided by Cys-34 and Cys-35. Positions 34–74 (CCACPDTKKLRDECIVEHGESACTKWIEAHKICLRAEGFNV) constitute a CHCH domain. 2 short sequence motifs (cx9C motif) span residues 37 to 47 (CPDTKKLRDEC) and 56 to 66 (CTKWIEAHKIC). Intrachain disulfides connect Cys-37–Cys-66 and Cys-47–Cys-56.

It belongs to the COX17 family.

The protein resides in the mitochondrion intermembrane space. Functionally, copper chaperone for cytochrome c oxidase (COX). Binds 2 copper ions and delivers them to the Cu(A) site of COX. Can complement the yeast mutant cox17. This Arabidopsis thaliana (Mouse-ear cress) protein is Cytochrome c oxidase copper chaperone 1 (COX17-1).